The chain runs to 365 residues: Anhydro-N-acetylmuramic acid kinase (365 aa).

ATP is bound at residue G9 to D16.

It belongs to the anhydro-N-acetylmuramic acid kinase family.

It carries out the reaction 1,6-anhydro-N-acetyl-beta-muramate + ATP + H2O = N-acetyl-D-muramate 6-phosphate + ADP + H(+). It participates in amino-sugar metabolism; 1,6-anhydro-N-acetylmuramate degradation. The protein operates within cell wall biogenesis; peptidoglycan recycling. Catalyzes the specific phosphorylation of 1,6-anhydro-N-acetylmuramic acid (anhMurNAc) with the simultaneous cleavage of the 1,6-anhydro ring, generating MurNAc-6-P. Is required for the utilization of anhMurNAc either imported from the medium or derived from its own cell wall murein, and thus plays a role in cell wall recycling. This Zymomonas mobilis subsp. mobilis (strain ATCC 31821 / ZM4 / CP4) protein is Anhydro-N-acetylmuramic acid kinase.